The sequence spans 369 residues: Histidinol-phosphate aminotransferase (369 aa).

An N6-(pyridoxal phosphate)lysine modification is found at lysine 223.

It belongs to the class-II pyridoxal-phosphate-dependent aminotransferase family. Histidinol-phosphate aminotransferase subfamily. As to quaternary structure, homodimer. Pyridoxal 5'-phosphate serves as cofactor.

The catalysed reaction is L-histidinol phosphate + 2-oxoglutarate = 3-(imidazol-4-yl)-2-oxopropyl phosphate + L-glutamate. Its pathway is amino-acid biosynthesis; L-histidine biosynthesis; L-histidine from 5-phospho-alpha-D-ribose 1-diphosphate: step 7/9. Functionally, catalyzes the conversion of imidazole acetol phosphate to histidinol phosphate. Can also transaminate aromatic amino acids and histidine in addition to histidinol phosphate. The sequence is that of Histidinol-phosphate aminotransferase from Zymomonas mobilis subsp. mobilis (strain ATCC 31821 / ZM4 / CP4).